A 268-amino-acid polypeptide reads, in one-letter code: Phosphatidylglycerol--prolipoprotein diacylglyceryl transferase (268 aa).

4 helical membrane-spanning segments follow: residues 14-34 (LGPI…FAGW), 57-77 (LTFY…IIFY), 90-110 (FFLW…LIAF), and 117-137 (IGAN…IGLG). R140 is a binding site for a 1,2-diacyl-sn-glycero-3-phospho-(1'-sn-glycerol). 3 helical membrane-spanning segments follow: residues 174–194 (QLFE…LVTI), 200–220 (YLVL…CEFF), and 240–260 (ILSI…FIKI).

This sequence belongs to the Lgt family.

Its subcellular location is the cell inner membrane. The catalysed reaction is L-cysteinyl-[prolipoprotein] + a 1,2-diacyl-sn-glycero-3-phospho-(1'-sn-glycerol) = an S-1,2-diacyl-sn-glyceryl-L-cysteinyl-[prolipoprotein] + sn-glycerol 1-phosphate + H(+). The protein operates within protein modification; lipoprotein biosynthesis (diacylglyceryl transfer). Its function is as follows. Catalyzes the transfer of the diacylglyceryl group from phosphatidylglycerol to the sulfhydryl group of the N-terminal cysteine of a prolipoprotein, the first step in the formation of mature lipoproteins. The sequence is that of Phosphatidylglycerol--prolipoprotein diacylglyceryl transferase from Francisella tularensis subsp. tularensis (strain FSC 198).